A 189-amino-acid chain; its full sequence is Adenylate kinase (189 aa).

Residue 11–16 (GSGKGT) coordinates ATP. Positions 31–60 (STGDVLRAEIKNGTELGKTAKGYIDQGQLI) are NMP. AMP contacts are provided by residues threonine 32, arginine 37, 58-60 (QLI), 86-89 (GFPR), and glutamine 93. The segment at 127–137 (KRGKESGRADD) is LID. ATP is bound at residue arginine 128. AMP contacts are provided by arginine 134 and arginine 145. Glycine 173 provides a ligand contact to ATP.

The protein belongs to the adenylate kinase family. In terms of assembly, monomer.

Its subcellular location is the cytoplasm. The enzyme catalyses AMP + ATP = 2 ADP. The protein operates within purine metabolism; AMP biosynthesis via salvage pathway; AMP from ADP: step 1/1. Functionally, catalyzes the reversible transfer of the terminal phosphate group between ATP and AMP. Plays an important role in cellular energy homeostasis and in adenine nucleotide metabolism. This chain is Adenylate kinase, found in Bacteroides fragilis (strain ATCC 25285 / DSM 2151 / CCUG 4856 / JCM 11019 / LMG 10263 / NCTC 9343 / Onslow / VPI 2553 / EN-2).